The sequence spans 211 residues: Probable endo-1,4-beta-xylanase 5 (211 aa).

Residues 1–16 form the signal peptide; it reads MKVTAAFASLLLTAFA. The GH11 domain maps to 19–210; that stretch reads APEPVLVSRS…GAGSASVTIS (192 aa). The active-site Nucleophile is glutamate 106. The active-site Proton donor is the glutamate 197.

It belongs to the glycosyl hydrolase 11 (cellulase G) family.

It is found in the secreted. It catalyses the reaction Endohydrolysis of (1-&gt;4)-beta-D-xylosidic linkages in xylans.. It participates in glycan degradation; xylan degradation. In terms of biological role, endo-1,4-beta-xylanase involved in the hydrolysis of xylan, a major structural heterogeneous polysaccharide found in plant biomass representing the second most abundant polysaccharide in the biosphere, after cellulose. The sequence is that of Probable endo-1,4-beta-xylanase 5 (XYN5) from Aspergillus niger (strain ATCC MYA-4892 / CBS 513.88 / FGSC A1513).